Here is a 436-residue protein sequence, read N- to C-terminus: 3-ketoacyl-CoA thiolase (436 aa).

The active-site Acyl-thioester intermediate is the cysteine 99. Catalysis depends on proton acceptor residues histidine 392 and cysteine 422.

Belongs to the thiolase-like superfamily. Thiolase family. In terms of assembly, heterotetramer of two alpha chains (FadJ) and two beta chains (FadI).

It is found in the cytoplasm. The enzyme catalyses an acyl-CoA + acetyl-CoA = a 3-oxoacyl-CoA + CoA. It functions in the pathway lipid metabolism; fatty acid beta-oxidation. Functionally, catalyzes the final step of fatty acid oxidation in which acetyl-CoA is released and the CoA ester of a fatty acid two carbons shorter is formed. The polypeptide is 3-ketoacyl-CoA thiolase (Escherichia coli O81 (strain ED1a)).